The chain runs to 238 residues: C-reactive protein (238 aa).

Positions 1-16 (MERFALWFIFLAGSLA) are cleaved as a signal peptide. At glutamine 17 the chain carries Pyrrolidone carboxylic acid. One can recognise a Pentraxin (PTX) domain in the interval 21-223 (VGNVFLFPKP…QATTQPKRQC (203 aa)). The cysteines at positions 52 and 113 are disulfide-linked. Ca(2+) is bound by residues aspartate 76, asparagine 77, glutamate 154, glutamine 155, aspartate 156, and glutamine 166.

The protein belongs to the pentraxin family. In terms of assembly, homodimer; disulfide-linked. It is not known if it assembles into a pentraxin (or pentaxin) structure. Pentaxins have a discoid arrangement of 5 non-covalently bound subunits. It depends on Ca(2+) as a cofactor. In terms of processing, cys-89 or Cys-223 or Cys-236 could be involved in interchain disulfide linkage.

It is found in the secreted. In terms of biological role, displays several functions associated with host defense: it promotes agglutination, bacterial capsular swelling, phagocytosis, and complement fixation through its calcium-dependent binding to phosphorylcholine. This chain is C-reactive protein (crp), found in Xenopus laevis (African clawed frog).